A 154-amino-acid polypeptide reads, in one-letter code: SsrA-binding protein (154 aa).

This sequence belongs to the SmpB family.

The protein resides in the cytoplasm. Its function is as follows. Required for rescue of stalled ribosomes mediated by trans-translation. Binds to transfer-messenger RNA (tmRNA), required for stable association of tmRNA with ribosomes. tmRNA and SmpB together mimic tRNA shape, replacing the anticodon stem-loop with SmpB. tmRNA is encoded by the ssrA gene; the 2 termini fold to resemble tRNA(Ala) and it encodes a 'tag peptide', a short internal open reading frame. During trans-translation Ala-aminoacylated tmRNA acts like a tRNA, entering the A-site of stalled ribosomes, displacing the stalled mRNA. The ribosome then switches to translate the ORF on the tmRNA; the nascent peptide is terminated with the 'tag peptide' encoded by the tmRNA and targeted for degradation. The ribosome is freed to recommence translation, which seems to be the essential function of trans-translation. The chain is SsrA-binding protein from Gluconacetobacter diazotrophicus (strain ATCC 49037 / DSM 5601 / CCUG 37298 / CIP 103539 / LMG 7603 / PAl5).